Reading from the N-terminus, the 65-residue chain is Oxiana weak toxin (65 aa).

5 disulfide bridges follow: Cys3-Cys24, Cys6-Cys11, Cys17-Cys42, Cys46-Cys57, and Cys58-Cys63.

This sequence belongs to the three-finger toxin family. Ancestral subfamily. Orphan group II sub-subfamily. Expressed by the venom gland.

It is found in the secreted. Functionally, binds to muscle and neuronal nicotinic acetylcholine receptors (nAChR). It binds to extracellular domain of rat alpha-7/CHRNA7 nAChR (IC(50)=2.2 uM) and to Torpedo californica membranes (IC(50)=30 uM). The protein is Oxiana weak toxin of Naja oxiana (Central Asian cobra).